Consider the following 448-residue polypeptide: Trigger factor (448 aa).

The PPIase FKBP-type domain maps to 172–257; sequence GDRVTVDFVG…MKKIEWPHLP (86 aa).

It belongs to the FKBP-type PPIase family. Tig subfamily.

It is found in the cytoplasm. The enzyme catalyses [protein]-peptidylproline (omega=180) = [protein]-peptidylproline (omega=0). In terms of biological role, involved in protein export. Acts as a chaperone by maintaining the newly synthesized protein in an open conformation. Functions as a peptidyl-prolyl cis-trans isomerase. The sequence is that of Trigger factor from Burkholderia ambifaria (strain ATCC BAA-244 / DSM 16087 / CCUG 44356 / LMG 19182 / AMMD) (Burkholderia cepacia (strain AMMD)).